A 261-amino-acid chain; its full sequence is Large ribosomal subunit protein uL10m (261 aa).

The N-terminal 28 residues, 1–28 (MAAAVAGMLRGGLLPQAGRLPTLQTVRY), are a transit peptide targeting the mitochondrion. The disordered stretch occupies residues 242 to 261 (EKDSVMSANGKPDPDTVPDS).

The protein belongs to the universal ribosomal protein uL10 family. As to quaternary structure, component of the mitochondrial large ribosomal subunit (mt-LSU). Mature mammalian 55S mitochondrial ribosomes consist of a small (28S) and a large (39S) subunit. The 28S small subunit contains a 12S ribosomal RNA (12S mt-rRNA) and 30 different proteins. The 39S large subunit contains a 16S rRNA (16S mt-rRNA), a copy of mitochondrial valine transfer RNA (mt-tRNA(Val)), which plays an integral structural role, and 52 different proteins. uL10m contributes a single cysteine residue to a zinc-binding site with mL66.

It is found in the mitochondrion. This is Large ribosomal subunit protein uL10m (MRPL10) from Homo sapiens (Human).